The following is a 457-amino-acid chain: Methylenetetrahydrofolate--tRNA-(uracil-5-)-methyltransferase TrmFO (457 aa).

Residue 8–13 (GGGLAG) coordinates FAD.

Belongs to the MnmG family. TrmFO subfamily. The cofactor is FAD.

The protein resides in the cytoplasm. It catalyses the reaction uridine(54) in tRNA + (6R)-5,10-methylene-5,6,7,8-tetrahydrofolate + NADH + H(+) = 5-methyluridine(54) in tRNA + (6S)-5,6,7,8-tetrahydrofolate + NAD(+). The catalysed reaction is uridine(54) in tRNA + (6R)-5,10-methylene-5,6,7,8-tetrahydrofolate + NADPH + H(+) = 5-methyluridine(54) in tRNA + (6S)-5,6,7,8-tetrahydrofolate + NADP(+). Catalyzes the folate-dependent formation of 5-methyl-uridine at position 54 (M-5-U54) in all tRNAs. The polypeptide is Methylenetetrahydrofolate--tRNA-(uracil-5-)-methyltransferase TrmFO (Thermosynechococcus vestitus (strain NIES-2133 / IAM M-273 / BP-1)).